A 338-amino-acid polypeptide reads, in one-letter code: Glycerol-3-phosphate dehydrogenase [NAD(P)+] (338 aa).

NADPH contacts are provided by Ser12, Trp13, and Lys110. Sn-glycerol 3-phosphate contacts are provided by Lys110, Gly141, and Ser143. Residue Ala145 coordinates NADPH. The sn-glycerol 3-phosphate site is built by Lys196, Asp249, Ser259, Arg260, and Asn261. Lys196 (proton acceptor) is an active-site residue. Arg260 contributes to the NADPH binding site. Positions 284 and 286 each coordinate NADPH.

Belongs to the NAD-dependent glycerol-3-phosphate dehydrogenase family.

It is found in the cytoplasm. It carries out the reaction sn-glycerol 3-phosphate + NAD(+) = dihydroxyacetone phosphate + NADH + H(+). It catalyses the reaction sn-glycerol 3-phosphate + NADP(+) = dihydroxyacetone phosphate + NADPH + H(+). Its pathway is membrane lipid metabolism; glycerophospholipid metabolism. In terms of biological role, catalyzes the reduction of the glycolytic intermediate dihydroxyacetone phosphate (DHAP) to sn-glycerol 3-phosphate (G3P), the key precursor for phospholipid synthesis. The protein is Glycerol-3-phosphate dehydrogenase [NAD(P)+] of Lactiplantibacillus plantarum (strain ATCC BAA-793 / NCIMB 8826 / WCFS1) (Lactobacillus plantarum).